The sequence spans 379 residues: Guanine nucleotide-binding protein G(s) subunit alpha (379 aa).

The G-alpha domain maps to 38-379 (STHRLLLLGA…RMHLRQYELL (342 aa)). The tract at residues 41-54 (RLLLLGAGESGKST) is G1 motif. Residues 46–53 (GAGESGKS), 182–188 (LRCRVLT), 207–211 (DVGGQ), 276–279 (NKQD), and Ala351 contribute to the GTP site. Mg(2+) contacts are provided by Ser53 and Thr188. A G2 motif region spans residues 180 to 188 (DILRCRVLT). Residues 203–212 (FHMFDVGGQR) form a G3 motif region. The G4 motif stretch occupies residues 272-279 (ILFLNKQD). The G5 motif stretch occupies residues 349-354 (TCAVDT).

It belongs to the G-alpha family. G(s) subfamily. G proteins are composed of 3 units; alpha, beta and gamma. The alpha chain contains the guanine nucleotide binding site.

In terms of biological role, guanine nucleotide-binding proteins (G proteins) are involved as modulators or transducers in various transmembrane signaling systems. The G(s) protein is involved in hormonal regulation of adenylate cyclase: it activates the cyclase in response to beta-adrenergic stimuli. This chain is Guanine nucleotide-binding protein G(s) subunit alpha, found in Schistosoma mansoni (Blood fluke).